The chain runs to 319 residues: MMNSSQFSDSQTTSLHRIPTFYCCYLLQSINKKQSFYIGSTPNPVRRLRQHNGNLSNGGAYRTKREGTRPWEMVLVVYGFTSKIAALQFEHAWQHGYKTHYIPMDDRIMKNANSGRTVHHKLGLVRQLLANVYFRHMNLKVHFFSMPILDVWNLNKFNIKMGSNEISVDVSQVSQETKTNLEQASDDDDDNGACSRDERNLQLVTELYDNTVTKENEIKEIIKDILVLGERNCNLCGQCYDYTSEDDTMKMHIFICPNSTCHYEAHLNCLYEKFIEEESGIDSKNILLPNFCMCPGCLDEMSWSDFVKISTMIKNSFSN.

Positions 20–103 constitute a GIY-YIG domain; sequence TFYCCYLLQS…QHGYKTHYIP (84 aa). Residues 233 to 297 form an SLX1-type zinc finger; the sequence is CNLCGQCYDY…LPNFCMCPGC (65 aa).

This sequence belongs to the SLX1 family. In terms of assembly, forms a heterodimer with SLX4. Requires a divalent metal cation as cofactor.

The protein localises to the nucleus. Functionally, catalytic subunit of the SLX1-SLX4 structure-specific endonuclease that resolves DNA secondary structures generated during DNA repair and recombination. Has endonuclease activity towards branched DNA substrates, introducing single-strand cuts in duplex DNA close to junctions with ss-DNA. This chain is Structure-specific endonuclease subunit SLX1, found in Vanderwaltozyma polyspora (strain ATCC 22028 / DSM 70294 / BCRC 21397 / CBS 2163 / NBRC 10782 / NRRL Y-8283 / UCD 57-17) (Kluyveromyces polysporus).